The following is a 1372-amino-acid chain: DNA-directed RNA polymerase subunit beta (1372 aa).

The protein belongs to the RNA polymerase beta chain family. As to quaternary structure, the RNAP catalytic core consists of 2 alpha, 1 beta, 1 beta' and 1 omega subunit. When a sigma factor is associated with the core the holoenzyme is formed, which can initiate transcription.

It carries out the reaction RNA(n) + a ribonucleoside 5'-triphosphate = RNA(n+1) + diphosphate. DNA-dependent RNA polymerase catalyzes the transcription of DNA into RNA using the four ribonucleoside triphosphates as substrates. The protein is DNA-directed RNA polymerase subunit beta of Rickettsia bellii (strain OSU 85-389).